The primary structure comprises 360 residues: Dihydroorotate dehydrogenase (quinone) (360 aa).

Residues 60–64 and Thr84 contribute to the FMN site; that span reads AGFDK. Residue Lys64 participates in substrate binding. 109 to 113 contributes to the substrate binding site; the sequence is NRMGF. FMN contacts are provided by Asn137 and Asn168. Asn168 is a binding site for substrate. Catalysis depends on Ser171, which acts as the Nucleophile. Residue Asn173 coordinates substrate. FMN is bound by residues Lys213 and Ser241. 242 to 243 is a substrate binding site; that stretch reads NT. FMN contacts are provided by residues Gly264, Gly293, and 314 to 315; that span reads YS.

The protein belongs to the dihydroorotate dehydrogenase family. Type 2 subfamily. Monomer. The cofactor is FMN.

It is found in the cell membrane. The catalysed reaction is (S)-dihydroorotate + a quinone = orotate + a quinol. Its pathway is pyrimidine metabolism; UMP biosynthesis via de novo pathway; orotate from (S)-dihydroorotate (quinone route): step 1/1. Functionally, catalyzes the conversion of dihydroorotate to orotate with quinone as electron acceptor. This Bartonella tribocorum (strain CIP 105476 / IBS 506) protein is Dihydroorotate dehydrogenase (quinone).